Consider the following 339-residue polypeptide: Phosphate acyltransferase (339 aa).

Belongs to the PlsX family. As to quaternary structure, homodimer. Probably interacts with PlsY.

Its subcellular location is the cytoplasm. The catalysed reaction is a fatty acyl-[ACP] + phosphate = an acyl phosphate + holo-[ACP]. The protein operates within lipid metabolism; phospholipid metabolism. Functionally, catalyzes the reversible formation of acyl-phosphate (acyl-PO(4)) from acyl-[acyl-carrier-protein] (acyl-ACP). This enzyme utilizes acyl-ACP as fatty acyl donor, but not acyl-CoA. This is Phosphate acyltransferase from Tolumonas auensis (strain DSM 9187 / NBRC 110442 / TA 4).